A 384-amino-acid chain; its full sequence is Transcriptional regulator of the unfolded protein response hacA (384 aa).

Positions 1 to 18 (MTESTFAVETFSMDSMSP) are enriched in polar residues. Disordered regions lie at residues 1 to 27 (MTES…IPRL) and 41 to 94 (LVPE…QRRI). Over residues 84-94 (KTEDEKEQRRI) the composition is skewed to basic and acidic residues. Residues 90-153 (EQRRIERVLR…NRLSQQVAKL (64 aa)) enclose the bZIP domain. Residues 92-101 (RRIERVLRNR) are basic motif. The interval 106–113 (ISRERKRL) is leucine-zipper. Disordered stretches follow at residues 208-256 (SIPF…PSDL) and 331-384 (PDED…AGAQ). The span at 218–240 (STTTTTTTTTTTSNNISSTSSTT) shows a compositional bias: low complexity.

The protein belongs to the bZIP family.

The protein resides in the nucleus. Its function is as follows. Master transcriptional regulator of the unfolded protein response (UPR) that recognizes and binds to the UPR element (UPRE) in the promoter of UPR-regulated genes. Exposure to antifungals and ER-stressing agents initiates the activation of hacA which occurs when a 20 nucleotide fragment is removed from part of the exon-2 and part of intron-2, which in turn promotes the arisen of the DNA binding site motif and a dimer interface domain. Modulates the expression of genes related to cell wall synthesis, ergosterol biosynthesis, pigmentation, heat shock proteins, and the genes coding for mannosyltransferase enzymes. Plays a key role in both response to stress and host-pathogen interaction. The sequence is that of Transcriptional regulator of the unfolded protein response hacA from Trichophyton rubrum (strain ATCC MYA-4607 / CBS 118892) (Athlete's foot fungus).